Consider the following 318-residue polypeptide: tRNA U34 carboxymethyltransferase (318 aa).

Carboxy-S-adenosyl-L-methionine is bound by residues lysine 85, tryptophan 99, lysine 104, glycine 124, 175-176 (LD), methionine 190, tyrosine 194, and arginine 311.

This sequence belongs to the class I-like SAM-binding methyltransferase superfamily. CmoB family. As to quaternary structure, homotetramer.

It carries out the reaction carboxy-S-adenosyl-L-methionine + 5-hydroxyuridine(34) in tRNA = 5-carboxymethoxyuridine(34) in tRNA + S-adenosyl-L-homocysteine + H(+). Its function is as follows. Catalyzes carboxymethyl transfer from carboxy-S-adenosyl-L-methionine (Cx-SAM) to 5-hydroxyuridine (ho5U) to form 5-carboxymethoxyuridine (cmo5U) at position 34 in tRNAs. The sequence is that of tRNA U34 carboxymethyltransferase from Ruthia magnifica subsp. Calyptogena magnifica.